Reading from the N-terminus, the 185-residue chain is Elongation factor P (185 aa).

The protein belongs to the elongation factor P family.

The protein localises to the cytoplasm. Its pathway is protein biosynthesis; polypeptide chain elongation. Involved in peptide bond synthesis. Stimulates efficient translation and peptide-bond synthesis on native or reconstituted 70S ribosomes in vitro. Probably functions indirectly by altering the affinity of the ribosome for aminoacyl-tRNA, thus increasing their reactivity as acceptors for peptidyl transferase. The protein is Elongation factor P of Thermosynechococcus vestitus (strain NIES-2133 / IAM M-273 / BP-1).